Consider the following 585-residue polypeptide: 4-hydroxy-3-methylbut-2-en-1-yl diphosphate synthase (flavodoxin) (585 aa).

Residues Cys492, Cys495, Cys526, and Glu533 each contribute to the [4Fe-4S] cluster site.

It belongs to the IspG family. [4Fe-4S] cluster is required as a cofactor.

It catalyses the reaction (2E)-4-hydroxy-3-methylbut-2-enyl diphosphate + oxidized [flavodoxin] + H2O + 2 H(+) = 2-C-methyl-D-erythritol 2,4-cyclic diphosphate + reduced [flavodoxin]. The protein operates within isoprenoid biosynthesis; isopentenyl diphosphate biosynthesis via DXP pathway; isopentenyl diphosphate from 1-deoxy-D-xylulose 5-phosphate: step 5/6. Functionally, converts 2C-methyl-D-erythritol 2,4-cyclodiphosphate (ME-2,4cPP) into 1-hydroxy-2-methyl-2-(E)-butenyl 4-diphosphate. The sequence is that of 4-hydroxy-3-methylbut-2-en-1-yl diphosphate synthase (flavodoxin) from Akkermansia muciniphila (strain ATCC BAA-835 / DSM 22959 / JCM 33894 / BCRC 81048 / CCUG 64013 / CIP 107961 / Muc).